We begin with the raw amino-acid sequence, 155 residues long: Small ribosomal subunit protein bS6 (155 aa).

Residues 94-155 (EKHEEGPSAM…RPRRPREDRV (62 aa)) are disordered.

Belongs to the bacterial ribosomal protein bS6 family.

Functionally, binds together with bS18 to 16S ribosomal RNA. The chain is Small ribosomal subunit protein bS6 from Rhizobium leguminosarum bv. trifolii (strain WSM2304).